A 235-amino-acid polypeptide reads, in one-letter code: Transmembrane emp24 domain-containing protein 9 (235 aa).

The signal sequence occupies residues 1-37 (MAAVRGVRVVGTSPGLLLGRGMRAFLLLLCLAARGGA). Residues 38 to 202 (LYFHIGETEK…RQTSESTNQR (165 aa)) lie on the Lumenal side of the membrane. Residues 47–145 (KKCFIEEIPD…MLRVHLDIQV (99 aa)) enclose the GOLD domain. The tract at residues 121 to 160 (CLHSNSTKFSLFAGGMLRVHLDIQVGEHANDYAEIAAKDK) is required for interaction with STX17. Asn-125 is a glycosylation site (N-linked (GlcNAc...) asparagine). Positions 154–184 (EIAAKDKLSELQLRVRQLVEQVEQIQKEQNY) form a coiled coil. An N6-acetyllysine modification is found at Lys-160. A helical transmembrane segment spans residues 203–222 (VLWWSILQTLILVAIGVWQM). Topologically, residues 223–235 (RHLKSFFEAKKLV) are cytoplasmic. Positions 228–229 (FF) match the COPII vesicle coat-binding motif. A COPI vesicle coat-binding motif is present at residues 228–235 (FFEAKKLV).

Belongs to the EMP24/GP25L family. As to quaternary structure, monomer and homodimer in endoplasmic reticulum. Predominantly monomeric and to lesser extent homodimeric in endoplasmic reticulum-Golgi intermediate compartment and cis-Golgi network. Probably oligomerizes with other members of the EMP24/GP25L family such as TMED2, TMED7 and TMED10. Interacts with TMED5. Interacts (via C-terminus) with COPG1; the interaction involves dimeric TMED9. Interacts with PTPN2 and SPAST. Interacts with STX17; the interaction is direct. In terms of processing, N-linked glycosylated containing high mannose.

It localises to the endoplasmic reticulum membrane. It is found in the golgi apparatus. The protein localises to the cis-Golgi network membrane. The protein resides in the endoplasmic reticulum-Golgi intermediate compartment membrane. Its subcellular location is the trans-Golgi network membrane. In terms of biological role, appears to be involved in vesicular protein trafficking, mainly in the early secretory pathway. In COPI vesicle-mediated retrograde transport involved in the coatomer recruitment to membranes of the early secretory pathway. Increases coatomer-dependent activity of ARFGAP2. Thought to play a crucial role in the specific retention of p24 complexes in cis-Golgi membranes; specifically contributes to the coupled localization of TMED2 and TMED10 in the cis-Golgi network. May be involved in organization of intracellular membranes, such as of the ER-Golgi intermediate compartment and the Golgi apparatus. Involved in ER localization of PTPN2. The sequence is that of Transmembrane emp24 domain-containing protein 9 (Tmed9) from Rattus norvegicus (Rat).